The following is a 104-amino-acid chain: Small ribosomal subunit protein bS6 (104 aa).

This sequence belongs to the bacterial ribosomal protein bS6 family.

Functionally, binds together with bS18 to 16S ribosomal RNA. This chain is Small ribosomal subunit protein bS6, found in Elusimicrobium minutum (strain Pei191).